Here is a 248-residue protein sequence, read N- to C-terminus: tRNA (guanine-N(1)-)-methyltransferase (248 aa).

Residues Gly113 and 133 to 138 (VGDYVL) contribute to the S-adenosyl-L-methionine site.

This sequence belongs to the RNA methyltransferase TrmD family. In terms of assembly, homodimer.

Its subcellular location is the cytoplasm. It catalyses the reaction guanosine(37) in tRNA + S-adenosyl-L-methionine = N(1)-methylguanosine(37) in tRNA + S-adenosyl-L-homocysteine + H(+). Its function is as follows. Specifically methylates guanosine-37 in various tRNAs. The polypeptide is tRNA (guanine-N(1)-)-methyltransferase (Shewanella sp. (strain W3-18-1)).